The primary structure comprises 329 residues: Glyceraldehyde-3-phosphate dehydrogenase 1 (329 aa).

Residues 11–12, Asp33, and Lys78 contribute to the NAD(+) site; that span reads RI. D-glyceraldehyde 3-phosphate is bound by residues 148–150, Thr179, 208–209, and Arg231; these read SCT and TG. Cys149 (nucleophile) is an active-site residue. Residue Asn313 coordinates NAD(+).

Belongs to the glyceraldehyde-3-phosphate dehydrogenase family. In terms of assembly, homotetramer.

Its subcellular location is the cytoplasm. It carries out the reaction D-glyceraldehyde 3-phosphate + phosphate + NAD(+) = (2R)-3-phospho-glyceroyl phosphate + NADH + H(+). It participates in carbohydrate degradation; glycolysis; pyruvate from D-glyceraldehyde 3-phosphate: step 1/5. The polypeptide is Glyceraldehyde-3-phosphate dehydrogenase 1 (GAP1) (Kluyveromyces lactis (strain ATCC 8585 / CBS 2359 / DSM 70799 / NBRC 1267 / NRRL Y-1140 / WM37) (Yeast)).